A 233-amino-acid chain; its full sequence is Large ribosomal subunit protein uL1 (233 aa).

The protein belongs to the universal ribosomal protein uL1 family. In terms of assembly, part of the 50S ribosomal subunit.

Its function is as follows. Binds directly to 23S rRNA. The L1 stalk is quite mobile in the ribosome, and is involved in E site tRNA release. In terms of biological role, protein L1 is also a translational repressor protein, it controls the translation of the L11 operon by binding to its mRNA. The sequence is that of Large ribosomal subunit protein uL1 from Brucella canis (strain ATCC 23365 / NCTC 10854 / RM-666).